The primary structure comprises 360 residues: Cell division protein DivIB (360 aa).

A disordered region spans residues 1–54 (MTEKDSNVEESVLEVEQASQVELDSEQISPAEKESVLAEEKEFSTDVDIPEMTA). Residues 1–139 (MTEKDSNVEE…VDIPSKVVWK (139 aa)) are Cytoplasmic-facing. Residues 17 to 28 (QASQVELDSEQI) show a composition bias toward polar residues. Positions 31-44 (AEKESVLAEEKEFS) are enriched in basic and acidic residues. A helical membrane pass occupies residues 140–160 (AIPVLVTSLLLAALALYFISP). At 161-360 (TSKKKQIEVV…MEVGIYRYAS (200 aa)) the chain is on the extracellular side. Positions 162–233 (SKKKQIEVVG…ATFTIHIKEY (72 aa)) constitute a POTRA domain.

This sequence belongs to the FtsQ/DivIB family. DivIB subfamily.

It localises to the cell membrane. In terms of biological role, cell division protein that may be involved in stabilizing or promoting the assembly of the division complex. The protein is Cell division protein DivIB of Streptococcus suis (strain GZ1).